The chain runs to 2319 residues: A-kinase anchor protein 6 (2319 aa).

2 stretches are compositionally biased toward polar residues: residues 1–12 (MLTMSVTLSPLR) and 324–339 (GVSS…AAQP). Disordered regions lie at residues 1–24 (MLTM…TDAS), 301–369 (VDDK…NATP), 493–532 (SRLK…VPNG), 566–614 (LQLQ…PSHV), and 691–757 (TRLG…SATK). Over residues 340-351 (SSETVQQESSSS) the composition is skewed to low complexity. Composition is skewed to polar residues over residues 518-532 (GKQA…VPNG) and 566-591 (LQLQ…SDNI). Over residues 697–711 (SPSSSSDIASSLGES) the composition is skewed to low complexity. Positions 735–754 (KYADEKSERASSSEKNESHS) are enriched in basic and acidic residues. Spectrin repeat units lie at residues 762–848 (QKLM…QLLE) and 1036–1150 (EKVD…LLDD). S1073 bears the Phosphoserine mark. The tract at residues 1250–1272 (KLGETSNEDPGYDEEADNHGGSQ) is disordered. The segment covering 1255–1265 (SNEDPGYDEEA) has biased composition (acidic residues). A phosphoserine mark is found at S1570 and S1595. Disordered stretches follow at residues 1821–1842 (VSDE…PSDT), 1900–1925 (EGIP…SHGK), and 1963–1983 (KCPN…TEKS). Composition is skewed to polar residues over residues 1830–1842 (DISS…PSDT), 1911–1920 (NVTSKVSENL), and 1972–1982 (NQSTASTPTEK). The interval 2063–2076 (IIDMASTALKSKSQ) is PKA-RII subunit binding domain. Positions 2198–2215 (FSDSSLSADDADTVALSS) are enriched in low complexity. A disordered region spans residues 2198 to 2319 (FSDSSLSADD…HEKRHRNMHR (122 aa)).

Interacts with RII subunit of PKA, phosphatase 2B (calcineurin) and AKAP79. Interacts with SYNPO2. In terms of tissue distribution, highly expressed in cardiac and skeletal muscle, followed by brain.

The protein resides in the sarcoplasmic reticulum. It is found in the nucleus membrane. In terms of biological role, binds to type II regulatory subunits of protein kinase A and anchors/targets them to the nuclear membrane or sarcoplasmic reticulum. May act as an adapter for assembling multiprotein complexes. The chain is A-kinase anchor protein 6 (AKAP6) from Homo sapiens (Human).